The following is a 304-amino-acid chain: 4-diphosphocytidyl-2-C-methyl-D-erythritol kinase (304 aa).

Lysine 18 is an active-site residue. 103–113 (PVAAGIGGGSA) is an ATP binding site. Residue aspartate 145 is part of the active site.

This sequence belongs to the GHMP kinase family. IspE subfamily.

It carries out the reaction 4-CDP-2-C-methyl-D-erythritol + ATP = 4-CDP-2-C-methyl-D-erythritol 2-phosphate + ADP + H(+). Its pathway is isoprenoid biosynthesis; isopentenyl diphosphate biosynthesis via DXP pathway; isopentenyl diphosphate from 1-deoxy-D-xylulose 5-phosphate: step 3/6. Catalyzes the phosphorylation of the position 2 hydroxy group of 4-diphosphocytidyl-2C-methyl-D-erythritol. In Rhodospirillum rubrum (strain ATCC 11170 / ATH 1.1.1 / DSM 467 / LMG 4362 / NCIMB 8255 / S1), this protein is 4-diphosphocytidyl-2-C-methyl-D-erythritol kinase.